The following is a 179-amino-acid chain: Large ribosomal subunit protein uL6 (179 aa).

This sequence belongs to the universal ribosomal protein uL6 family. As to quaternary structure, part of the 50S ribosomal subunit.

Functionally, this protein binds to the 23S rRNA, and is important in its secondary structure. It is located near the subunit interface in the base of the L7/L12 stalk, and near the tRNA binding site of the peptidyltransferase center. In Akkermansia muciniphila (strain ATCC BAA-835 / DSM 22959 / JCM 33894 / BCRC 81048 / CCUG 64013 / CIP 107961 / Muc), this protein is Large ribosomal subunit protein uL6.